The sequence spans 254 residues: Isoprenyl transferase (254 aa).

Asp12 is an active-site residue. Asp12 contributes to the Mg(2+) binding site. Residues 13–16, Trp17, Arg25, His29, and 57–59 each bind substrate; these read GNGR and SSE. Asn60 serves as the catalytic Proton acceptor. Substrate is bound by residues Trp61, Arg63, Arg180, and 186–188; that span reads RLS. Residue Glu199 coordinates Mg(2+).

It belongs to the UPP synthase family. In terms of assembly, homodimer. The cofactor is Mg(2+).

Functionally, catalyzes the condensation of isopentenyl diphosphate (IPP) with allylic pyrophosphates generating different type of terpenoids. This Brucella abortus biovar 1 (strain 9-941) protein is Isoprenyl transferase.